Here is a 166-residue protein sequence, read N- to C-terminus: Small ribosomal subunit protein uS5 (166 aa).

The 64-residue stretch at 11 to 74 folds into the S5 DRBM domain; the sequence is LQEKLIAVNR…EKARRNMINV (64 aa).

Belongs to the universal ribosomal protein uS5 family. Part of the 30S ribosomal subunit. Contacts proteins S4 and S8.

Functionally, with S4 and S12 plays an important role in translational accuracy. In terms of biological role, located at the back of the 30S subunit body where it stabilizes the conformation of the head with respect to the body. In Actinobacillus pleuropneumoniae serotype 5b (strain L20), this protein is Small ribosomal subunit protein uS5.